A 472-amino-acid chain; its full sequence is MATLAADTRDYVVADIGLADFGRKEINIAETEMPGLMALRAEYGASQPLKGARITGSLHMTIQTAVLIETLTALGAEVRWATCNIFSTQNHAAAAIAASGVPVFAVKGESLADYWDYVGRIFDWESDNDGRTANLILDDGGDATMFALWGAKLEAGETMPPPENEEEVEMQRALKAFIAAKPGYLTKTVKAIKGVSEETTTGVHRLYHIAKKGELPFPAINVNDSVTKSKFDNLYGCKESLVDAIRRGTDVMLAGKVATVAGFGDVGKGSAQSLRNGGARVLVTEIDPICALQAAMEGFEVVTMDEAVKRSDIFVTATGNADVITAEHMAAMKNMAIVCNIGHFDSEIQIAALANYKWTEVKPQVDLVEFPDGKQIIILSKGRLVNLGNATGHPSFVMSASFTNQTLAQIELWTRSEQYQNDVYVLPKHLDEKVAALHLEKLGVKLTKLTQKQADYIGVPVEGPFKPDHYRY.

Thr-61, Asp-139, and Glu-198 together coordinate substrate. 199 to 201 (TTT) lines the NAD(+) pocket. Residues Lys-228 and Asp-232 each contribute to the substrate site. NAD(+) contacts are provided by residues Asn-233, 262–267 (GFGDVG), Glu-285, Asn-320, 341–343 (IGH), and Asn-386.

It belongs to the adenosylhomocysteinase family. The cofactor is NAD(+).

Its subcellular location is the cytoplasm. It catalyses the reaction S-adenosyl-L-homocysteine + H2O = L-homocysteine + adenosine. Its pathway is amino-acid biosynthesis; L-homocysteine biosynthesis; L-homocysteine from S-adenosyl-L-homocysteine: step 1/1. May play a key role in the regulation of the intracellular concentration of adenosylhomocysteine. This chain is Adenosylhomocysteinase, found in Sphingopyxis alaskensis (strain DSM 13593 / LMG 18877 / RB2256) (Sphingomonas alaskensis).